A 1849-amino-acid polypeptide reads, in one-letter code: MSKNIQRQRSISSISSRGVDRDRDPASGGLGLLSPYNSRSPLAGLHHSPGSLDATANQLSRPTFLLERKATEDIAKLDGVLFDDIPTLGSSNDHISSLGAGSPYPTINTSLAVTNPNYLSASSPGGPRRRANTASGPLSPAPPASPIDRLSKTTNRGSFVPSTARQPMNSQPPAPASSAPPPKQRTTSPSVASPPSQTRSQTVPYLSSNFGPTANMYGQRQPSGVDPSRPFHQVPLPPPPMSPPPAIGTINSIMTNIPPPPPRYPSAPAAAIHLPGPPGAPPPSGLPPPPGPPPNNTTNWQGTWIGAYGSYIPPPPPQQTHRPYNPQPYKTVNGQTIAIPPPPPPTESMQMSATYIPQGDSYGEGVGIPGLGMDDMAAWSATSQSSWLGGYNSIGSLAPTNASDTAASTPVDAYGSHNRDNSTTSNATSSGASGIPPELAAQWPLDRVLDWLQANNFSNDWRSTFRALDLHGNRFLEVGSANGGRGNFGMMHQLVYPRLAAECISSGTGWDQPREREEGKRMRRLIRHIVKGETPGTGMSSHTRKESISNTSLVPTSAGPDSGSPDTPIKAPGPGFSVGHPGGNHRKLLVGNFDDEGAHRRSPVASEPSEVGITFTERSSSNRGYSPAGSPAPTPGLFSSSTAPNLASSPGGRFGGHRNRNSTDSVSSNAAIYGSGVPPDASQVLRSQMNFGDMAKDTRRYGHDGGNRPSPLGDNASNGDRSAGASEPPGSAKEGKSFLSIFNHRKKKHHDDPDSPTSPMQHKSHSLGSRGNASETSLERPGSSVSTSHEHNTPASSMRSRRITTGRIFILATLDYWNYRMVDVSDVESASDLRQLICINLGLPDADGAQVYLTELGKFDHEDPLDDSQLVANKKVRADAAGSLKVFVRPGNMAGLAVNIGQSQNALSPAHLPAGAKMDEDTYARLNGQRRRSSSSPPASRQNTLTGGEHGKPTSTGADDDENKDPKSDDIAQQAEAHRIEMERKQQAYLAKRKHARENGNSPSENGTGSYTGIVGPKVIDFDEPRNSPFEDKKPFDSAFAPQRRAPAAPLDPSATLIKANSLSKRGSHQRNSQGSVDGFPSKRQGTGMTESPKHISEKRKPTNERQALGGIGAALAGMGRGLGGIAHPGGAGQRGTSPNRSSPGSAGESAGVASSTTDRGEDAKSRKPISSGNVSPTSSARTVSDEPPQLPKVVIKPRIFDGDSSSDEDSDDDSDDGLFAKPLAGRGGDDAAAKGKEPATKPVAKSPMSKHGTFWNDADSDGDEDPISESASNLNKRPSLTVNTKRGRKGLSVTFTSPDLPSSAGSKTAAGDEDDRSSRGSKRTPNTPHSEGWDSNNDKDVKLSRRKSFMEKDTSIWANRPPTDALINNLEDFFPNLDVDQPVLEEGELPGDLPPSPIAEAEEPHDQQQAKSMTTSRISNLYNDSDTLGSDESTLKALERPASIVSVARKNTRRSGGLGRMKSIREVAHKRYTQGAGAPPPVPAAPNNSNNSSSSGSKNSNLMRRKSTKMFNANIVQIRPERGSMILPQIPQDHLPSLPHNANNQIPKRQTTFRWFKGQLIGKGTYGRVYLGMNATTGEFLAVKEVEVNPKAAGGDKNKMKELVAALDQEIDTMQHLDHVNIVQYLGCERKETSISIFLEYIPGGSIGSCLRKHGKFEESVVSSLTRQTLSGLAYLHREGILHRDLKADNILLDVDGTAKISDFGISKKTDNIYGNDKTNSMQGSVFWMAPEVIRSQGEGYSAKVDIWSLGCVVLEMFAGRRPWSKDEAVGAIYKIANGETPPIPEEVSAAVTPVALSFMWDCFSVNPEERPTATKLLAEHPFCVFRDDYDFDQTELYAKIKGTWNTK.

The 270-residue stretch at 1556-1825 (WFKGQLIGKG…TKLLAEHPFC (270 aa)) folds into the Protein kinase domain. ATP-binding positions include 1562–1570 (IGKGTYGRV) and Lys1585. Asp1686 functions as the Proton acceptor in the catalytic mechanism.

It belongs to the protein kinase superfamily. STE Ser/Thr protein kinase family. MAP kinase kinase kinase subfamily.

The catalysed reaction is L-seryl-[protein] + ATP = O-phospho-L-seryl-[protein] + ADP + H(+). The enzyme catalyses L-threonyl-[protein] + ATP = O-phospho-L-threonyl-[protein] + ADP + H(+). Functionally, mitogen-activated protein kinase kinase kinase, part of the mkh1-mkk1-spm1 MAPK cascade that regulates vegetative growth, conidial formation, colony surface hydrophobicity, osmotic stress, cell wall integrity maintenance, carbon and nitrogen source utilization, chitin distribution, septa formation, and pathogenicity. The chain is Mitogen-activated protein kinase kinase kinase mkh1 from Cytospora mali (Apple Valsa canker fungus).